Consider the following 343-residue polypeptide: Probable magnesium transporter NIPA4 (343 aa).

The Extracellular portion of the chain corresponds to 1 to 18 (MAESSGSWRDSYKGMSSD). Residues 19–39 (NIKGLVLALSSSLFIGASFIV) traverse the membrane as a helical segment. Residues 40-66 (KKKGLKKAASTGTRAGVGGYSYLYEPL) are Cytoplasmic-facing. Residues 67 to 87 (WWIGMTTMLLGEIANFAAYAF) traverse the membrane as a helical segment. Topologically, residues 88-90 (APA) are extracellular. A helical transmembrane segment spans residues 91–111 (ILVTPLGAVSIIISAVLAHII). Residues 112-115 (LREK) are Cytoplasmic-facing. The helical transmembrane segment at 116–136 (LHIFGILGCALCVVGSTTIVL) threads the bilayer. The Extracellular segment spans residues 137 to 157 (HAPQEREIDSVIEVWNLATEP). Residues 158-178 (AFMFYASLVIGAAVFLIIRFV) form a helical membrane-spanning segment. The Cytoplasmic portion of the chain corresponds to 179-189 (PQYGQTNVMVY). The helical transmembrane segment at 190 to 210 (IGICSLVGSLSVMSVKALGIA) threads the bilayer. Residues 211–220 (LKLTFSGTNQ) lie on the Extracellular side of the membrane. A helical membrane pass occupies residues 221–241 (LFYPQTWIFTLVVLTCVVTQL). The Cytoplasmic portion of the chain corresponds to 242–254 (NYLNKALDTFNTA). A helical membrane pass occupies residues 255-275 (IVSPIYYVMFTSLTILASVIM). The Extracellular segment spans residues 276–283 (FKDWDRQN). The helical transmembrane segment at 284 to 304 (GTQIVTEICGFVTILSGTFLL) threads the bilayer. Residues 305-343 (HRTKDMVEGSSVILPLRISKHINEEEGIPLRRQESLRSP) are Cytoplasmic-facing.

Belongs to the NIPA (TC 2.A.7) family. In terms of assembly, homodimer.

The protein localises to the cell membrane. It localises to the early endosome. Acts as a Mg(2+) transporter. Can also transport other divalent cations such as Fe(2+), Sr(2+), Ba(2+), Mn(2+) and Co(2+) but to a much less extent than Mg(2+). The polypeptide is Probable magnesium transporter NIPA4 (Arabidopsis thaliana (Mouse-ear cress)).